Here is a 438-residue protein sequence, read N- to C-terminus: tRNA-2-methylthio-N(6)-dimethylallyladenosine synthase (438 aa).

The MTTase N-terminal domain maps to 2–118; it reads KSFYLETFGC…LADMVRDAEL (117 aa). [4Fe-4S] cluster contacts are provided by Cys-11, Cys-47, Cys-81, Cys-157, Cys-161, and Cys-164. One can recognise a Radical SAM core domain in the interval 143–373; the sequence is PSAEVSRFVT…LALQEEITRQ (231 aa). The 63-residue stretch at 376–438 folds into the TRAM domain; the sequence is QMDIGQVLPV…YRNSHLGERV (63 aa).

It belongs to the methylthiotransferase family. MiaB subfamily. As to quaternary structure, monomer. The cofactor is [4Fe-4S] cluster.

The protein localises to the cytoplasm. It catalyses the reaction N(6)-dimethylallyladenosine(37) in tRNA + (sulfur carrier)-SH + AH2 + 2 S-adenosyl-L-methionine = 2-methylsulfanyl-N(6)-dimethylallyladenosine(37) in tRNA + (sulfur carrier)-H + 5'-deoxyadenosine + L-methionine + A + S-adenosyl-L-homocysteine + 2 H(+). Its function is as follows. Catalyzes the methylthiolation of N6-(dimethylallyl)adenosine (i(6)A), leading to the formation of 2-methylthio-N6-(dimethylallyl)adenosine (ms(2)i(6)A) at position 37 in tRNAs that read codons beginning with uridine. The polypeptide is tRNA-2-methylthio-N(6)-dimethylallyladenosine synthase (Syntrophotalea carbinolica (strain DSM 2380 / NBRC 103641 / GraBd1) (Pelobacter carbinolicus)).